An 86-amino-acid polypeptide reads, in one-letter code: Small ribosomal subunit protein bS20 (86 aa).

The span at 1-27 (MANIKSAKKRAVQSEKRRQHNASRRSM) shows a compositional bias: basic residues. The tract at residues 1 to 28 (MANIKSAKKRAVQSEKRRQHNASRRSMM) is disordered.

The protein belongs to the bacterial ribosomal protein bS20 family.

Binds directly to 16S ribosomal RNA. This Proteus mirabilis (strain HI4320) protein is Small ribosomal subunit protein bS20.